We begin with the raw amino-acid sequence, 643 residues long: MRLSELSHPNQLHGLTIAQLEDIACQIRERHLQVVSTSGGHLGPGLGVVELTIALYQTLDLDVDKVVWDVGHQAYPHKLITGRYENFNTLRQKGGVAGYLKRSESTFDHFGAGHASTSISAALGMAFARDRLGLNHKCVAVIGDGALTGGMALEAINHAGHLPNTPFLVVLNDNDMSISPPVGALSTYLNRMRHSAPVQFISDSVQESVKNLPFIGGEIPPEIKSLTGSVKRLAVPKVGAVFEELGFTYMGPIDGHDISRMIRTFQAAHRVGGPVLVHVATTKGKGYPYAEADQVGYHAQSAFDLTTGKSIPSKSPKPPSYSKVFGQTLVKICEQNNKVIGITAAMATGTGLDLLQKAIPNQYVDVGIAEQHAVTLAAGMACDGLRPVVAIYSTFLQRAYDQLIHDVGIQKLPVTFVLDRAGIVGADGPTHQGQYDISYLRSVPNFTVMAPKDEAELQRMLVTCLENDGPCALRIPRGSGEGVTLMEEGWEPLKIGRGEILEDGDDLLILAYGSMVTPAVQTAELLKQAGISSTVVNARFLRPLDQALIHPLARRIGKVVTIEEGALGGGFGSAVVESFSDQDLLVPTFRLGIPDKLVDHASPQQSKESLGLTPSQMSKSIMKRYGWDTSDSLFLSNSNTSSA.

Residues H72 and 113 to 115 (GHA) each bind thiamine diphosphate. D144 is a binding site for Mg(2+). Residues 145–146 (GA), N174, Y287, and E370 contribute to the thiamine diphosphate site. A Mg(2+)-binding site is contributed by N174.

It belongs to the transketolase family. DXPS subfamily. In terms of assembly, homodimer. Mg(2+) serves as cofactor. Thiamine diphosphate is required as a cofactor.

It catalyses the reaction D-glyceraldehyde 3-phosphate + pyruvate + H(+) = 1-deoxy-D-xylulose 5-phosphate + CO2. Its pathway is metabolic intermediate biosynthesis; 1-deoxy-D-xylulose 5-phosphate biosynthesis; 1-deoxy-D-xylulose 5-phosphate from D-glyceraldehyde 3-phosphate and pyruvate: step 1/1. Catalyzes the acyloin condensation reaction between C atoms 2 and 3 of pyruvate and glyceraldehyde 3-phosphate to yield 1-deoxy-D-xylulose-5-phosphate (DXP). The chain is 1-deoxy-D-xylulose-5-phosphate synthase from Prochlorococcus marinus (strain MIT 9211).